Reading from the N-terminus, the 317-residue chain is UDP-3-O-acylglucosamine N-acyltransferase (317 aa).

His229 (proton acceptor) is an active-site residue.

This sequence belongs to the transferase hexapeptide repeat family. LpxD subfamily. As to quaternary structure, homotrimer.

The enzyme catalyses a UDP-3-O-[(3R)-3-hydroxyacyl]-alpha-D-glucosamine + a (3R)-hydroxyacyl-[ACP] = a UDP-2-N,3-O-bis[(3R)-3-hydroxyacyl]-alpha-D-glucosamine + holo-[ACP] + H(+). It functions in the pathway bacterial outer membrane biogenesis; LPS lipid A biosynthesis. Catalyzes the N-acylation of UDP-3-O-acylglucosamine using 3-hydroxyacyl-ACP as the acyl donor. Is involved in the biosynthesis of lipid A, a phosphorylated glycolipid that anchors the lipopolysaccharide to the outer membrane of the cell. The chain is UDP-3-O-acylglucosamine N-acyltransferase from Campylobacter curvus (strain 525.92).